A 300-amino-acid polypeptide reads, in one-letter code: Acetylglutamate kinase (300 aa).

Residues 73–74, arginine 95, and asparagine 197 contribute to the substrate site; that span reads GG.

This sequence belongs to the acetylglutamate kinase family. ArgB subfamily.

It localises to the cytoplasm. It carries out the reaction N-acetyl-L-glutamate + ATP = N-acetyl-L-glutamyl 5-phosphate + ADP. Its pathway is amino-acid biosynthesis; L-arginine biosynthesis; N(2)-acetyl-L-ornithine from L-glutamate: step 2/4. Its function is as follows. Catalyzes the ATP-dependent phosphorylation of N-acetyl-L-glutamate. The polypeptide is Acetylglutamate kinase (Polynucleobacter asymbioticus (strain DSM 18221 / CIP 109841 / QLW-P1DMWA-1) (Polynucleobacter necessarius subsp. asymbioticus)).